The primary structure comprises 418 residues: Glutamyl-tRNA(Gln) amidotransferase subunit D (418 aa).

The Asparaginase/glutaminase domain occupies 74–405 (KNISILSTGG…KEAKELMSKN (332 aa)). Residues Thr84, Thr160, Asp161, and Lys237 contribute to the active site.

The protein belongs to the asparaginase 1 family. GatD subfamily. Heterodimer of GatD and GatE.

The enzyme catalyses L-glutamyl-tRNA(Gln) + L-glutamine + ATP + H2O = L-glutaminyl-tRNA(Gln) + L-glutamate + ADP + phosphate + H(+). Functionally, allows the formation of correctly charged Gln-tRNA(Gln) through the transamidation of misacylated Glu-tRNA(Gln) in organisms which lack glutaminyl-tRNA synthetase. The reaction takes place in the presence of glutamine and ATP through an activated gamma-phospho-Glu-tRNA(Gln). The GatDE system is specific for glutamate and does not act on aspartate. This is Glutamyl-tRNA(Gln) amidotransferase subunit D from Methanococcus maripaludis (strain DSM 14266 / JCM 13030 / NBRC 101832 / S2 / LL).